A 360-amino-acid chain; its full sequence is Mitogen-activated protein kinase 14 (360 aa).

At serine 2 the chain carries N-acetylserine. Phosphoserine is present on serine 2. A Phosphothreonine modification is found at threonine 16. The Protein kinase domain occupies 24–308 (YQNLSPVGSG…AAQALAHAYF (285 aa)). ATP-binding positions include 30–38 (VGSGAYGSV) and lysine 53. Residue lysine 53 is modified to N6-acetyllysine. The active-site Proton acceptor is the aspartate 150. At lysine 152 the chain carries N6-acetyllysine. Phosphothreonine; by MAP2K3, MAP2K4, MAP2K6 and autocatalysis is present on threonine 180. The short motif at 180 to 182 (TGY) is the TXY element. A Phosphotyrosine; by MAP2K3, MAP2K4, MAP2K6 and autocatalysis modification is found at tyrosine 182. The residue at position 263 (threonine 263) is a Phosphothreonine. Tyrosine 323 bears the Phosphotyrosine; by ZAP70 mark.

This sequence belongs to the protein kinase superfamily. CMGC Ser/Thr protein kinase family. MAP kinase subfamily. As to quaternary structure, component of a signaling complex containing at least AKAP13, PKN1, MAPK14, ZAK and MAP2K3. Within this complex, AKAP13 interacts directly with PKN1, which in turn recruits MAPK14, MAP2K3 and ZAK. Binds to a kinase interaction motif within the protein tyrosine phosphatase, PTPRR. This interaction retains MAPK14 in the cytoplasm and prevents nuclear accumulation. Interacts with SPAG9 and GADD45A. Interacts with CDC25B, CDC25C, DUSP1, DUSP10, DUSP16, NP60, SUPT20H and TAB1. Interacts with casein kinase II subunits CSNK2A1 and CSNK2B. Interacts with PPM1D. Interacts with CDK5RAP3; recruits PPM1D to MAPK14 and may regulate its dephosphorylation. Interacts with DUSP2; this interaction does not lead to catalytic activation of DUSP2 and dephosphrylation of MAPK14. Mg(2+) serves as cofactor. In terms of processing, dually phosphorylated on Thr-180 and Tyr-182 by the MAP2Ks MAP2K3/MKK3, MAP2K4/MKK4 and MAP2K6/MKK6 in response to inflammatory citokines, environmental stress or growth factors, which activates the enzyme. Dual phosphorylation can also be mediated by TAB1-mediated autophosphorylation. TCR engagement in T-cells also leads to Tyr-323 phosphorylation by ZAP70. Dephosphorylated and inactivated by DUPS1, DUSP10 and DUSP16. PPM1D also mediates dephosphorylation and inactivation of MAPK14. Acetylated at Lys-53 and Lys-152 by KAT2B and EP300. Acetylation at Lys-53 increases the affinity for ATP and enhances kinase activity. Lys-53 and Lys-152 are deacetylated by HDAC3. Post-translationally, ubiquitinated. Ubiquitination leads to degradation by the proteasome pathway.

It is found in the cytoplasm. The protein resides in the nucleus. The catalysed reaction is L-seryl-[protein] + ATP = O-phospho-L-seryl-[protein] + ADP + H(+). The enzyme catalyses L-threonyl-[protein] + ATP = O-phospho-L-threonyl-[protein] + ADP + H(+). Its activity is regulated as follows. Activated by cell stresses such as DNA damage, heat shock, osmotic shock, anisomycin and sodium arsenite, as well as pro-inflammatory stimuli such as bacterial lipopolysaccharide (LPS) and interleukin-1. Activation occurs through dual phosphorylation of Thr-180 and Tyr-182 by either of two dual specificity kinases, MAP2K3/MKK3 or MAP2K6/MKK6, and potentially also MAP2K4/MKK4, as well as by TAB1-mediated autophosphorylation. MAPK14 phosphorylated on both Thr-180 and Tyr-182 is 10-20-fold more active than MAPK14 phosphorylated only on Thr-180, whereas MAPK14 phosphorylated on Tyr-182 alone is inactive. whereas Thr-180 is necessary for catalysis, Tyr-182 may be required for auto-activation and substrate recognition. Phosphorylated at Tyr-323 by ZAP70 in an alternative activation pathway in response to TCR signaling in T-cells. This alternative pathway is inhibited by GADD45A. Inhibited by dual specificity phosphatases, such as DUSP1, DUSP10, and DUSP16. Specifically inhibited by the binding of pyridinyl-imidazole compounds, which are cytokine-suppressive anti-inflammatory drugs (CSAID). SB203580 is an inhibitor of MAPK14. Its function is as follows. Serine/threonine kinase which acts as an essential component of the MAP kinase signal transduction pathway. MAPK14 is one of the four p38 MAPKs which play an important role in the cascades of cellular responses evoked by extracellular stimuli such as pro-inflammatory cytokines or physical stress leading to direct activation of transcription factors. Accordingly, p38 MAPKs phosphorylate a broad range of proteins and it has been estimated that they may have approximately 200 to 300 substrates each. Some of the targets are downstream kinases which are activated through phosphorylation and further phosphorylate additional targets. RPS6KA5/MSK1 and RPS6KA4/MSK2 can directly phosphorylate and activate transcription factors such as CREB1, ATF1, the NF-kappa-B isoform RELA/NFKB3, STAT1 and STAT3, but can also phosphorylate histone H3 and the nucleosomal protein HMGN1. RPS6KA5/MSK1 and RPS6KA4/MSK2 play important roles in the rapid induction of immediate-early genes in response to stress or mitogenic stimuli, either by inducing chromatin remodeling or by recruiting the transcription machinery. On the other hand, two other kinase targets, MAPKAPK2/MK2 and MAPKAPK3/MK3, participate in the control of gene expression mostly at the post-transcriptional level, by phosphorylating ZFP36 (tristetraprolin) and ELAVL1, and by regulating EEF2K, which is important for the elongation of mRNA during translation. MKNK1/MNK1 and MKNK2/MNK2, two other kinases activated by p38 MAPKs, regulate protein synthesis by phosphorylating the initiation factor EIF4E2. MAPK14 also interacts with casein kinase II, leading to its activation through autophosphorylation and further phosphorylation of TP53/p53. In the cytoplasm, the p38 MAPK pathway is an important regulator of protein turnover. For example, CFLAR is an inhibitor of TNF-induced apoptosis whose proteasome-mediated degradation is regulated by p38 MAPK phosphorylation. In a similar way, MAPK14 phosphorylates the ubiquitin ligase SIAH2, regulating its activity towards EGLN3. MAPK14 may also inhibit the lysosomal degradation pathway of autophagy by interfering with the intracellular trafficking of the transmembrane protein ATG9. Another function of MAPK14 is to regulate the endocytosis of membrane receptors by different mechanisms that impinge on the small GTPase RAB5A. In addition, clathrin-mediated EGFR internalization induced by inflammatory cytokines and UV irradiation depends on MAPK14-mediated phosphorylation of EGFR itself as well as of RAB5A effectors. Ectodomain shedding of transmembrane proteins is regulated by p38 MAPKs as well. In response to inflammatory stimuli, p38 MAPKs phosphorylate the membrane-associated metalloprotease ADAM17. Such phosphorylation is required for ADAM17-mediated ectodomain shedding of TGF-alpha family ligands, which results in the activation of EGFR signaling and cell proliferation. Another p38 MAPK substrate is FGFR1. FGFR1 can be translocated from the extracellular space into the cytosol and nucleus of target cells, and regulates processes such as rRNA synthesis and cell growth. FGFR1 translocation requires p38 MAPK activation. In the nucleus, many transcription factors are phosphorylated and activated by p38 MAPKs in response to different stimuli. Classical examples include ATF1, ATF2, ATF6, ELK1, PTPRH, DDIT3, TP53/p53 and MEF2C and MEF2A. The p38 MAPKs are emerging as important modulators of gene expression by regulating chromatin modifiers and remodelers. The promoters of several genes involved in the inflammatory response, such as IL6, IL8 and IL12B, display a p38 MAPK-dependent enrichment of histone H3 phosphorylation on 'Ser-10' (H3S10ph) in LPS-stimulated myeloid cells. This phosphorylation enhances the accessibility of the cryptic NF-kappa-B-binding sites marking promoters for increased NF-kappa-B recruitment. Phosphorylates CDC25B and CDC25C which is required for binding to 14-3-3 proteins and leads to initiation of a G2 delay after ultraviolet radiation. Phosphorylates TIAR following DNA damage, releasing TIAR from GADD45A mRNA and preventing mRNA degradation. The p38 MAPKs may also have kinase-independent roles, which are thought to be due to the binding to targets in the absence of phosphorylation. Protein O-Glc-N-acylation catalyzed by the OGT is regulated by MAPK14, and, although OGT does not seem to be phosphorylated by MAPK14, their interaction increases upon MAPK14 activation induced by glucose deprivation. This interaction may regulate OGT activity by recruiting it to specific targets such as neurofilament H, stimulating its O-Glc-N-acylation. Required in mid-fetal development for the growth of embryo-derived blood vessels in the labyrinth layer of the placenta. Also plays an essential role in developmental and stress-induced erythropoiesis, through regulation of EPO gene expression. Phosphorylates S100A9 at 'Thr-113'. The protein is Mitogen-activated protein kinase 14 of Canis lupus familiaris (Dog).